A 479-amino-acid polypeptide reads, in one-letter code: FAD-dependent monooxygenase cdmI (479 aa).

Residues Glu43, Gly57, and Arg116 each contribute to the FAD site. N-linked (GlcNAc...) asparagine glycans are attached at residues Asn156 and Asn198. FAD is bound by residues Asp315 and Ala328. Residues 453 to 473 traverse the membrane as a helical segment; sequence PFILAVLAGLGFLLTMFKQQW.

It belongs to the paxM FAD-dependent monooxygenase family. Requires FAD as cofactor.

The protein localises to the membrane. It carries out the reaction verruculide C + AH2 + O2 = verruculide C epoxide + A + H2O. Its pathway is secondary metabolite biosynthesis; terpenoid biosynthesis. Functionally, FAD-dependent monooxygenase; part of the gene cluster that mediates the biosynthesis of chrodrimanin B, a meroterpenoid that acts as a potent blocker of insect GABA-gated chloride channels. The first step of the pathway is the biosynthesis of 6-hydroxymellein by the polyketide synthase cdmE. The prenyltransferase cdmH acts as a 6-hydroxymellein 5-farnesyltransferase and produces the hydrophobic metabolite verruculide C. The FAD-dependent monooxygenase cdmI further converts verruculide C into verruculide B. The terpene cyclase cdmG then produced the pentacyclic molecule 3-hydroxypentacecilide A, the backbone structure of chrodrimanin B, via folding the farnesyl moiety of the substrate into the chair-boat conformation. The short-chain dehydrogenase/reductase cdmF functions as the 3-OH dehydrogenase that oxidizes the C-3 hydroxyl group of 3-hydroxypentacecilide A and produces chrodrimanin C, the dehydrogenated product of 3-hydroxypentacecilide A. The cytochrome P450 monooxygenase cdmJ then accepts both 3-hydroxypentacecilide A and chrodrimanin C and functions as a C-7-beta-hydroxylase to produce respectively chrodrimanin H and chrodrimanin F. The dioxygenase cdmA accepts chrodrimanin H to afford chrodrimanin E, which is further transformed to chrodrimanin A by the dioxygenase cdmD. CdmA can also accept chrodrimanin C as substrate to convert it into verruculide A, which is further converted into chrodrimanin T by cdmD. The last step of the biosynthesis is proposed to be performed by the acetyltransferase cdmC which acetylates chrodrimanin A to yield chrodrimanin B. The pathway may also lead to the production of additional shunt products, including chrodrimanins T and U. This chain is FAD-dependent monooxygenase cdmI, found in Talaromyces verruculosus (Penicillium verruculosum).